Consider the following 27-residue polypeptide: SCNNSCQQHSQCASHCVCLLNKCRTVN.

Disulfide bonds link cysteine 2–cysteine 16, cysteine 6–cysteine 18, and cysteine 12–cysteine 23. An Asparagine amide modification is found at asparagine 27.

As to expression, expressed by the venom duct.

It localises to the secreted. In terms of biological role, probable neurotoxin that inhibits ion channels. This is Conotoxin from Conus amadis (Amadis cone).